The chain runs to 263 residues: HTH-type transcriptional repressor NanR (263 aa).

A disordered region spans residues 1-22; sequence MGLMNAFDSQTEDSSPAIGRNL. Residues 30-98 enclose the HTH gntR-type domain; sequence KKLSEMVEEE…NGERARVSRP (69 aa). A DNA-binding region (H-T-H motif) is located at residues 58–77; it reads ERELMAFFNVGRPSVREALA.

It belongs to the NanR family.

Transcriptional repressor that controls expression of the genes required for the catabolism of sialic acids. In Shigella sonnei (strain Ss046), this protein is HTH-type transcriptional repressor NanR.